A 129-amino-acid polypeptide reads, in one-letter code: Large ribosomal subunit protein bL12 (129 aa).

The protein belongs to the bacterial ribosomal protein bL12 family. Homodimer. Part of the ribosomal stalk of the 50S ribosomal subunit. Forms a multimeric L10(L12)X complex, where L10 forms an elongated spine to which 2 to 4 L12 dimers bind in a sequential fashion. Binds GTP-bound translation factors.

Its function is as follows. Forms part of the ribosomal stalk which helps the ribosome interact with GTP-bound translation factors. Is thus essential for accurate translation. This Solidesulfovibrio magneticus (strain ATCC 700980 / DSM 13731 / RS-1) (Desulfovibrio magneticus) protein is Large ribosomal subunit protein bL12.